The sequence spans 692 residues: Small conductance calcium-activated potassium channel-like protein 3 (692 aa).

The chain crosses the membrane as a helical span at residues 270 to 290; the sequence is SLYLALFGVILMLVESEITAE. Residues 313–333 form a helical membrane-spanning segment; it reads TIALLYHIILYHLNDIVLELV. The chain crosses the membrane as a helical span at residues 349–369; it reads VIQFCIEFICCGICPLPGSGE. A helical transmembrane segment spans residues 401-421; the sequence is VILSCFMLCRSYLFARFMVLH. Residues 455–475 form a helical membrane-spanning segment; that stretch reads PVLFLTTFTFIFWIIMSWMFV. The pore-forming intramembrane region spans 492-512; the sequence is YSNSLWFIAITFMLNGYGDIV. A helical membrane pass occupies residues 520 to 540; that stretch reads FIAIFVGVVGAVISSILIAVI. Residues 667-683 show a composition bias toward polar residues; the sequence is HSTPNVPHLQGLTSSPV. The disordered stretch occupies residues 667–692; that stretch reads HSTPNVPHLQGLTSSPVPSDRYDNRF.

It belongs to the potassium channel KCNN family. SK subfamily. As to quaternary structure, heterooligomer.

Its subcellular location is the membrane. Its function is as follows. Forms a voltage-independent potassium channel activated by intracellular calcium. In Caenorhabditis elegans, this protein is Small conductance calcium-activated potassium channel-like protein 3 (kcnl-3).